The following is a 166-amino-acid chain: Crossover junction endodeoxyribonuclease RuvC (166 aa).

Catalysis depends on residues Asp7, Glu67, and Asp139. 3 residues coordinate Mg(2+): Asp7, Glu67, and Asp139.

It belongs to the RuvC family. In terms of assembly, homodimer which binds Holliday junction (HJ) DNA. The HJ becomes 2-fold symmetrical on binding to RuvC with unstacked arms; it has a different conformation from HJ DNA in complex with RuvA. In the full resolvosome a probable DNA-RuvA(4)-RuvB(12)-RuvC(2) complex forms which resolves the HJ. Mg(2+) serves as cofactor.

The protein resides in the cytoplasm. The catalysed reaction is Endonucleolytic cleavage at a junction such as a reciprocal single-stranded crossover between two homologous DNA duplexes (Holliday junction).. Functionally, the RuvA-RuvB-RuvC complex processes Holliday junction (HJ) DNA during genetic recombination and DNA repair. Endonuclease that resolves HJ intermediates. Cleaves cruciform DNA by making single-stranded nicks across the HJ at symmetrical positions within the homologous arms, yielding a 5'-phosphate and a 3'-hydroxyl group; requires a central core of homology in the junction. The consensus cleavage sequence is 5'-(A/T)TT(C/G)-3'. Cleavage occurs on the 3'-side of the TT dinucleotide at the point of strand exchange. HJ branch migration catalyzed by RuvA-RuvB allows RuvC to scan DNA until it finds its consensus sequence, where it cleaves and resolves the cruciform DNA. This is Crossover junction endodeoxyribonuclease RuvC from Paramagnetospirillum magneticum (strain ATCC 700264 / AMB-1) (Magnetospirillum magneticum).